The following is a 122-amino-acid chain: NADPH-dependent 7-cyano-7-deazaguanine reductase (122 aa).

C34 (thioimide intermediate) is an active-site residue. The Proton donor role is filled by D41. Substrate-binding positions include 56 to 58 (VEL) and 75 to 76 (HE).

It belongs to the GTP cyclohydrolase I family. QueF type 1 subfamily.

It is found in the cytoplasm. It carries out the reaction 7-aminomethyl-7-carbaguanine + 2 NADP(+) = 7-cyano-7-deazaguanine + 2 NADPH + 3 H(+). The protein operates within tRNA modification; tRNA-queuosine biosynthesis. Catalyzes the NADPH-dependent reduction of 7-cyano-7-deazaguanine (preQ0) to 7-aminomethyl-7-deazaguanine (preQ1). This is NADPH-dependent 7-cyano-7-deazaguanine reductase from Anaeromyxobacter dehalogenans (strain 2CP-C).